Consider the following 444-residue polypeptide: Type VII secretion system protein EssB (444 aa).

The Cytoplasmic portion of the chain corresponds to 1-229 (MVKNHNPKNE…RKVGHTVFKW (229 aa)). The chain crosses the membrane as a helical span at residues 230–250 (VAIGMTTLSVLLIAFLAFLYF). The Extracellular segment spans residues 251–444 (SVMKHNERIE…EKRQEAERKK (194 aa)). Residues 366-444 (KNNGDLSNDK…EKRQEAERKK (79 aa)) are disordered. The span at 372-444 (SNDKRSEETK…EKRQEAERKK (73 aa)) shows a compositional bias: basic and acidic residues. Residues 387–443 (LQDILDKEKQVKDEKAKSEEEKAKAKDEKLKQQEENEKKQKEQAQKDKEKRQEAERK) are a coiled coil.

This sequence belongs to the EssB family. In terms of assembly, may oligomerize and interact with other membrane components to form the Ess system. Interacts with EsaA.

It localises to the cell membrane. Its function is as follows. Component of the type VII secretion system (Ess). Required for the secretion of EsxA and proper accumulation of EssB and EssD. The sequence is that of Type VII secretion system protein EssB from Staphylococcus aureus (strain USA300).